Reading from the N-terminus, the 345-residue chain is Methionine import ATP-binding protein MetN (345 aa).

The ABC transporter domain occupies 2–241 (IKLNNITKIF…PKTELAQEFI (240 aa)). 38–45 (GASGAGKS) lines the ATP pocket.

The protein belongs to the ABC transporter superfamily. Methionine importer (TC 3.A.1.24) family. In terms of assembly, the complex is composed of two ATP-binding proteins (MetN), two transmembrane proteins (MetI) and a solute-binding protein (MetQ).

It localises to the cell inner membrane. It catalyses the reaction L-methionine(out) + ATP + H2O = L-methionine(in) + ADP + phosphate + H(+). The enzyme catalyses D-methionine(out) + ATP + H2O = D-methionine(in) + ADP + phosphate + H(+). Functionally, part of the ABC transporter complex MetNIQ involved in methionine import. Responsible for energy coupling to the transport system. The chain is Methionine import ATP-binding protein MetN from Haemophilus influenzae (strain 86-028NP).